Consider the following 473-residue polypeptide: Photosystem II CP43 reaction center protein (473 aa).

Positions 1–14 (MKTLYSLRRFYPVE) are excised as a propeptide. At Thr-15 the chain carries N-acetylthreonine. Thr-15 is subject to Phosphothreonine. 5 consecutive transmembrane segments (helical) span residues 69 to 93 (LFEVAHFVPEKPMYEQGLILLPHLA), 134 to 155 (LLGPETLEESFPFFGYVWKDRN), 178 to 200 (KALYFGGVYDTWAPGGGDVRKIT), 255 to 275 (KPFAWARRAFVWSGEAYLSYS), and 291 to 312 (WFNNTAYPSEFYGPTGPEASQA). Glu-367 serves as a coordination point for [CaMn4O5] cluster. Residues 447-471 (RARAAAAGFEKGIDRDFEPVLSMTP) traverse the membrane as a helical segment.

It belongs to the PsbB/PsbC family. PsbC subfamily. In terms of assembly, PSII is composed of 1 copy each of membrane proteins PsbA, PsbB, PsbC, PsbD, PsbE, PsbF, PsbH, PsbI, PsbJ, PsbK, PsbL, PsbM, PsbT, PsbX, PsbY, PsbZ, Psb30/Ycf12, at least 3 peripheral proteins of the oxygen-evolving complex and a large number of cofactors. It forms dimeric complexes. Binds multiple chlorophylls and provides some of the ligands for the Ca-4Mn-5O cluster of the oxygen-evolving complex. It may also provide a ligand for a Cl- that is required for oxygen evolution. PSII binds additional chlorophylls, carotenoids and specific lipids. is required as a cofactor.

Its subcellular location is the plastid. The protein localises to the chloroplast thylakoid membrane. Its function is as follows. One of the components of the core complex of photosystem II (PSII). It binds chlorophyll and helps catalyze the primary light-induced photochemical processes of PSII. PSII is a light-driven water:plastoquinone oxidoreductase, using light energy to abstract electrons from H(2)O, generating O(2) and a proton gradient subsequently used for ATP formation. The protein is Photosystem II CP43 reaction center protein of Calycanthus floridus var. glaucus (Eastern sweetshrub).